We begin with the raw amino-acid sequence, 251 residues long: Eukaryotic translation initiation factor 4E-3 (251 aa).

Residues 200 to 251 form a disordered region; sequence DSSARTSSTVKPRICLPAKDPAPVKEKGPAATTSPSNPGTEATGTSPATPTP. Over residues 230-251 the composition is skewed to polar residues; it reads ATTSPSNPGTEATGTSPATPTP.

This sequence belongs to the eukaryotic initiation factor 4E family. In terms of assembly, eIF4F is a multi-subunit complex, the composition of which varies with external and internal environmental conditions. It is composed of at least eIF4A, eIF4E and eIF4G. eIF4E is also known to interact with other partners. Interacts with mxt. Component of the pid-1 variant of the PETISCO complex (also called the pid-3, erh-2, tofu-6, and ife-3 small RNA complex) containing at least pid-1, tofu-6, ife-3, pid-3, and erh-2, which is required for the biogenesis of a class of 21 nucleotide PIWI-interacting RNAs (piRNAs) that possess a uracil residue at the 5'-end (also called 21U-RNAs). Component of the tost-1 variant of the PETISCO complex (also called the pid-3, erh-2, tofu-6, and ife-3 small RNA complex) containing at least tost-1, tofu-6, ife-3, pid-3, and erh-2, which plays an essential role in embryogenesis. Within the pid-1 and tost-1 variants of the PETISCO complexes interacts with tofu-6 (via C-terminus). In contrast to the pid-1 variant of the PETISCO complex, the tost-1 variant of the PETISCO complex plays a minor role in the biogenesis of 21U-RNAs. As to expression, highly expressed in the germline (at protein level).

It is found in the cytoplasmic granule. It localises to the cytoplasm. The protein localises to the perinuclear region. In terms of biological role, recognizes and binds the 7-methylguanosine-containing mRNA cap during an early step in the initiation of protein synthesis and facilitates ribosome binding by inducing the unwinding of the mRNAs secondary structures. All 5 eIF4E proteins bind monomethyl cap structures. Only ife-1, ife-2 and ife-5 bind trimethyl cap structures which result from trans-splicing. Translation of trimethyl cap structure mRNAs may be regulated by intracellular redox state; disulfide bonds change the width and depth of the cap-binding cavity determining selectivity to mRNA caps. Ife-3 is essential for viability. Component of the pid-1 and tost-1 variants of the PETISCO complexes, which have roles in the biogenesis of a class of 21 nucleotide PIWI-interacting RNAs (piRNAs) that possess a uracil residue at the 5'-end (also called 21U-RNAs) and embryogenesis, respectively. Within the pid-1 variant of the PETISCO complex binds to capped 21U-RNA precursor molecules, possibly playing a role in the processing of the 5' end of the molecules to promote binding of other complex components such as pid-3. However, it is not essential for the biogenesis of 21U-RNAs by itself. Within the tost-1 variant of the PETISCO complex binds to splice leader SL1 RNA fragments to possibly play a role in their processing. The sequence is that of Eukaryotic translation initiation factor 4E-3 from Caenorhabditis elegans.